A 96-amino-acid chain; its full sequence is Mitochondrial import inner membrane translocase subunit Tim13-A (96 aa).

The Twin CX3C motif motif lies at 47 to 70; it reads CFRKCIGKPGGSLDNSEQKCIAMC. Cystine bridges form between Cys-47-Cys-70 and Cys-51-Cys-66.

The protein belongs to the small Tim family. Heterohexamer; composed of 3 copies of TIMM8 (TIMM8A or TIMM8B) and 3 copies of TIMM13, named soluble 70 kDa complex. Associates with the TIM22 complex, whose core is composed of TIMM22.

The protein resides in the mitochondrion inner membrane. In terms of biological role, mitochondrial intermembrane chaperone that participates in the import and insertion of some multi-pass transmembrane proteins into the mitochondrial inner membrane. Also required for the transfer of beta-barrel precursors from the TOM complex to the sorting and assembly machinery (SAM complex) of the outer membrane. Acts as a chaperone-like protein that protects the hydrophobic precursors from aggregation and guide them through the mitochondrial intermembrane space. The TIMM8-TIMM13 complex mediates the import of some proteins while the predominant TIMM9-TIMM10 70 kDa complex mediates the import of much more proteins. The polypeptide is Mitochondrial import inner membrane translocase subunit Tim13-A (timm13-a) (Xenopus laevis (African clawed frog)).